The following is a 202-amino-acid chain: Small ribosomal subunit protein uS4c (202 aa).

The S4 RNA-binding domain occupies Met90–Ile153.

The protein belongs to the universal ribosomal protein uS4 family. Part of the 30S ribosomal subunit. Contacts protein S5. The interaction surface between S4 and S5 is involved in control of translational fidelity.

It localises to the plastid. Its subcellular location is the chloroplast. Functionally, one of the primary rRNA binding proteins, it binds directly to 16S rRNA where it nucleates assembly of the body of the 30S subunit. Its function is as follows. With S5 and S12 plays an important role in translational accuracy. This Hypopterygium laricinum (Moss) protein is Small ribosomal subunit protein uS4c (rps4).